We begin with the raw amino-acid sequence, 327 residues long: Vacuolar protein sorting-associated protein 26A (327 aa).

The disordered stretch occupies residues 306-327 (RTNFHQRFESPESQASAEQPEM). The residue at position 315 (Ser-315) is a Phosphoserine. Residues 316-327 (PESQASAEQPEM) show a composition bias toward polar residues.

This sequence belongs to the VPS26 family. In terms of assembly, component of the heterotrimeric retromer cargo-selective complex (CSC), also described as vacuolar protein sorting subcomplex (VPS), formed by VPS26 (VPS26A or VPS26B), VPS29 and VPS35. The CSC has a highly elongated structure with VPS26 and VPS29 binding independently at opposite distal ends of VPS35 as central platform. The CSC is believed to associate with variable sorting nexins to form functionally distinct retromer complex variants. The originally described retromer complex (also called SNX-BAR retromer) is a pentamer containing the CSC and a heterodimeric membrane-deforming subcomplex formed between SNX1 or SNX2 and SNX5 or SNX6 (also called SNX-BAR subcomplex); the respective CSC and SNX-BAR subcomplexes associate with low affinity. The CSC associates with SNX3 to form a SNX3-retromer complex. The CSC associates with SNX27, the WASH complex and the SNX-BAR subcomplex to form the SNX27-retromer complex. Interacts with VPS29, VPS35, SNX27, SNX1, SNX2, SNX5, SNX6, SNX3, RAB7A, ECPAS, EHD1, WASHC5, SORL1.

It localises to the cytoplasm. The protein resides in the endosome membrane. Its subcellular location is the early endosome. Acts as a component of the retromer cargo-selective complex (CSC). The CSC is believed to be the core functional component of retromer or respective retromer complex variants acting to prevent missorting of selected transmembrane cargo proteins into the lysosomal degradation pathway. The recruitment of the CSC to the endosomal membrane involves RAB7A and SNX3. The SNX-BAR retromer mediates retrograde transport of cargo proteins from endosomes to the trans-Golgi network (TGN) and is involved in endosome-to-plasma membrane transport for cargo protein recycling. The SNX3-retromer mediates the retrograde endosome-to-TGN transport of WLS distinct from the SNX-BAR retromer pathway. The SNX27-retromer is believed to be involved in endosome-to-plasma membrane trafficking and recycling of a broad spectrum of cargo proteins. The CSC complex seems to act as recruitment hub for other proteins, such as the WASH complex and TBC1D5. Required for retrograde transport of lysosomal enzyme receptor IGF2R. Required to regulate transcytosis of the polymeric immunoglobulin receptor (pIgR-pIgA). Required for the endosomal localization of WASHC2 (indicative for the WASH complex). Required for the endosomal localization of TBC1D5. Mediates retromer cargo recognition of SORL1 and is involved in trafficking of SORL1 implicated in sorting and processing of APP. Involved in retromer-independent lysosomal sorting of F2R. Involved in recycling of ADRB2. Acts redundantly with VSP26B in SNX-27 mediated endocytic recycling of SLC2A1/GLUT1. Enhances the affinity of SNX27 for PDZ-binding motifs in cargo proteins. The polypeptide is Vacuolar protein sorting-associated protein 26A (VPS26A) (Bos taurus (Bovine)).